A 192-amino-acid polypeptide reads, in one-letter code: dITP/XTP pyrophosphatase (192 aa).

7 to 12 (SNNKNK) contacts substrate. Catalysis depends on aspartate 68, which acts as the Proton acceptor. Residue aspartate 68 coordinates Mg(2+). Substrate-binding positions include threonine 69, 148-151 (FGYD), lysine 171, and 176-177 (HR).

It belongs to the HAM1 NTPase family. In terms of assembly, homodimer. It depends on Mg(2+) as a cofactor.

It carries out the reaction XTP + H2O = XMP + diphosphate + H(+). The enzyme catalyses dITP + H2O = dIMP + diphosphate + H(+). It catalyses the reaction ITP + H2O = IMP + diphosphate + H(+). Its function is as follows. Pyrophosphatase that catalyzes the hydrolysis of nucleoside triphosphates to their monophosphate derivatives, with a high preference for the non-canonical purine nucleotides XTP (xanthosine triphosphate), dITP (deoxyinosine triphosphate) and ITP. Seems to function as a house-cleaning enzyme that removes non-canonical purine nucleotides from the nucleotide pool, thus preventing their incorporation into DNA/RNA and avoiding chromosomal lesions. The polypeptide is dITP/XTP pyrophosphatase (Flavobacterium johnsoniae (strain ATCC 17061 / DSM 2064 / JCM 8514 / BCRC 14874 / CCUG 350202 / NBRC 14942 / NCIMB 11054 / UW101) (Cytophaga johnsonae)).